The sequence spans 607 residues: MCGIIGIIGNDEVAPRLVDALKRLEYRGYDSAGIATLQNGRLDRRRAEGKLVNLEKRLAGEPLPGVIGIGHTRWATHGRPVEHNAHPHITTRLAVVHNGIIENFAELRAMLEAEGRKFETETDTEAVAHLVTRELEKGKSPVEAVRDCLPHLKGAFALAFLFEGDEELLIGARQGPPLAVGYGEGEMFLGSDAIALAPFTDTISYLEDGDWAVLTRNGVSIYDENNKPVERPVQKSQNTNMLVSKGNHRHFMQKEMFEQPEVISHTLANYLDFTTGKVRKEAIGIDFSKVDRLTITACGTAYYAATVAKYWFEQIARLPVDSDIASEFRYREMPLSKDSLAMFVSQSGETADTLASLRYCKAQGLKIASVVNVTGSTIARESDAVFPTLAGPEIGVASTKAFTCQLSAMASLAIAAARARGAIDEVREQELVHQLSEAPRFINQVLKLEDQIAAVCHDLSKVNHVLYLGRGTSFPLAMEGALKLKEISYIHAEGYAAGELKHGPIALIDETMPVIVIAPSDRLYEKTVSNMQEVAARGGRIILITDKKGAESASIDTMATIVLPEVPEFISPLVYALPIQMLAYHTAVLMGTDVDQPRNLAKSVTVE.

Cys2 serves as the catalytic Nucleophile; for GATase activity. Residues 2–217 form the Glutamine amidotransferase type-2 domain; the sequence is CGIIGIIGND…DGDWAVLTRN (216 aa). SIS domains lie at 283 to 422 and 455 to 597; these read IGID…ARGA and VCHD…VDQP. Lys602 acts as the For Fru-6P isomerization activity in catalysis.

As to quaternary structure, homodimer.

It localises to the cytoplasm. It carries out the reaction D-fructose 6-phosphate + L-glutamine = D-glucosamine 6-phosphate + L-glutamate. In terms of biological role, catalyzes the first step in hexosamine metabolism, converting fructose-6P into glucosamine-6P using glutamine as a nitrogen source. The polypeptide is Glutamine--fructose-6-phosphate aminotransferase [isomerizing] (Brucella abortus biovar 1 (strain 9-941)).